The sequence spans 96 residues: Co-chaperonin GroES (96 aa).

Belongs to the GroES chaperonin family. Heptamer of 7 subunits arranged in a ring. Interacts with the chaperonin GroEL.

The protein resides in the cytoplasm. Functionally, together with the chaperonin GroEL, plays an essential role in assisting protein folding. The GroEL-GroES system forms a nano-cage that allows encapsulation of the non-native substrate proteins and provides a physical environment optimized to promote and accelerate protein folding. GroES binds to the apical surface of the GroEL ring, thereby capping the opening of the GroEL channel. This chain is Co-chaperonin GroES, found in Thiobacillus denitrificans (strain ATCC 25259 / T1).